Consider the following 158-residue polypeptide: Cyclic pyranopterin monophosphate synthase (158 aa).

Substrate contacts are provided by residues 76–78 and 114–115; these read LCH and ME. Residue aspartate 129 is part of the active site.

This sequence belongs to the MoaC family. Homohexamer; trimer of dimers.

The enzyme catalyses (8S)-3',8-cyclo-7,8-dihydroguanosine 5'-triphosphate = cyclic pyranopterin phosphate + diphosphate. It functions in the pathway cofactor biosynthesis; molybdopterin biosynthesis. Functionally, catalyzes the conversion of (8S)-3',8-cyclo-7,8-dihydroguanosine 5'-triphosphate to cyclic pyranopterin monophosphate (cPMP). In Shewanella woodyi (strain ATCC 51908 / MS32), this protein is Cyclic pyranopterin monophosphate synthase.